A 186-amino-acid polypeptide reads, in one-letter code: Myosin light chain 1, skeletal muscle isoform (186 aa).

Position 1 is a blocked amino end (Met) (methionine 1). The disordered stretch occupies residues methionine 1–alanine 26. Residues alanine 12 to alanine 26 show a composition bias toward pro residues. EF-hand domains follow at residues aspartate 42–asparagine 77 and alanine 119–lysine 154.

In terms of assembly, myosin is a hexamer of 2 heavy chains and 4 light chains.

This is Myosin light chain 1, skeletal muscle isoform from Chelon ramada (Thin-lipped grey mullet).